The following is a 499-amino-acid chain: Glycerol kinase (499 aa).

Residue T13 coordinates ADP. Residues T13, T14, and S15 each contribute to the ATP site. Residue T13 participates in sn-glycerol 3-phosphate binding. An ADP-binding site is contributed by R17. Sn-glycerol 3-phosphate is bound by residues R83, E84, Y135, and D244. 5 residues coordinate glycerol: R83, E84, Y135, D244, and Q245. Residues T266 and G310 each coordinate ADP. ATP is bound by residues T266, G310, Q314, and G411. Residues G411 and N415 each contribute to the ADP site.

Belongs to the FGGY kinase family.

The enzyme catalyses glycerol + ATP = sn-glycerol 3-phosphate + ADP + H(+). It functions in the pathway polyol metabolism; glycerol degradation via glycerol kinase pathway; sn-glycerol 3-phosphate from glycerol: step 1/1. With respect to regulation, inhibited by fructose 1,6-bisphosphate (FBP). Functionally, key enzyme in the regulation of glycerol uptake and metabolism. Catalyzes the phosphorylation of glycerol to yield sn-glycerol 3-phosphate. This is Glycerol kinase from Pseudothermotoga lettingae (strain ATCC BAA-301 / DSM 14385 / NBRC 107922 / TMO) (Thermotoga lettingae).